The chain runs to 361 residues: Phospho-N-acetylmuramoyl-pentapeptide-transferase (361 aa).

10 helical membrane passes run 28 to 48 (LAII…IKFL), 74 to 94 (TMGG…LADL), 99 to 119 (IWIT…DDYA), 133 to 153 (SKLV…EYLD), 168 to 188 (LNLD…VGSS), 203 to 223 (VPIA…GNLI), 236 to 256 (TGEL…FLWF), 263 to 283 (VFMG…ISVI), 288 to 308 (IVLA…ILQV), and 338 to 358 (KVVI…LSSL).

The protein belongs to the glycosyltransferase 4 family. MraY subfamily. It depends on Mg(2+) as a cofactor.

It localises to the cell inner membrane. It carries out the reaction UDP-N-acetyl-alpha-D-muramoyl-L-alanyl-gamma-D-glutamyl-meso-2,6-diaminopimeloyl-D-alanyl-D-alanine + di-trans,octa-cis-undecaprenyl phosphate = di-trans,octa-cis-undecaprenyl diphospho-N-acetyl-alpha-D-muramoyl-L-alanyl-D-glutamyl-meso-2,6-diaminopimeloyl-D-alanyl-D-alanine + UMP. It functions in the pathway cell wall biogenesis; peptidoglycan biosynthesis. Catalyzes the initial step of the lipid cycle reactions in the biosynthesis of the cell wall peptidoglycan: transfers peptidoglycan precursor phospho-MurNAc-pentapeptide from UDP-MurNAc-pentapeptide onto the lipid carrier undecaprenyl phosphate, yielding undecaprenyl-pyrophosphoryl-MurNAc-pentapeptide, known as lipid I. The protein is Phospho-N-acetylmuramoyl-pentapeptide-transferase of Rickettsia akari (strain Hartford).